The following is a 375-amino-acid chain: 23S rRNA (uracil(747)-C(5))-methyltransferase RlmC (375 aa).

Cys-3, Cys-11, Cys-14, and Cys-87 together coordinate [4Fe-4S] cluster. Gln-212, Phe-241, Glu-262, and Asn-307 together coordinate S-adenosyl-L-methionine. The Nucleophile role is filled by Cys-334.

The protein belongs to the class I-like SAM-binding methyltransferase superfamily. RNA M5U methyltransferase family. RlmC subfamily.

It catalyses the reaction uridine(747) in 23S rRNA + S-adenosyl-L-methionine = 5-methyluridine(747) in 23S rRNA + S-adenosyl-L-homocysteine + H(+). Its function is as follows. Catalyzes the formation of 5-methyl-uridine at position 747 (m5U747) in 23S rRNA. The polypeptide is 23S rRNA (uracil(747)-C(5))-methyltransferase RlmC (Escherichia coli O127:H6 (strain E2348/69 / EPEC)).